The following is a 115-amino-acid chain: Peptidyl-tRNA hydrolase (115 aa).

The protein belongs to the PTH2 family.

Its subcellular location is the cytoplasm. The catalysed reaction is an N-acyl-L-alpha-aminoacyl-tRNA + H2O = an N-acyl-L-amino acid + a tRNA + H(+). Functionally, the natural substrate for this enzyme may be peptidyl-tRNAs which drop off the ribosome during protein synthesis. The chain is Peptidyl-tRNA hydrolase from Methanocaldococcus jannaschii (strain ATCC 43067 / DSM 2661 / JAL-1 / JCM 10045 / NBRC 100440) (Methanococcus jannaschii).